We begin with the raw amino-acid sequence, 460 residues long: UDP-N-acetylmuramate--L-alanine ligase (460 aa).

118 to 124 (GTHGKTT) contributes to the ATP binding site.

Belongs to the MurCDEF family.

It is found in the cytoplasm. The catalysed reaction is UDP-N-acetyl-alpha-D-muramate + L-alanine + ATP = UDP-N-acetyl-alpha-D-muramoyl-L-alanine + ADP + phosphate + H(+). The protein operates within cell wall biogenesis; peptidoglycan biosynthesis. Cell wall formation. This is UDP-N-acetylmuramate--L-alanine ligase from Gloeobacter violaceus (strain ATCC 29082 / PCC 7421).